The chain runs to 122 residues: Protein SPIRAL1-like 3 (122 aa).

2 disordered regions span residues 1–78 (MGKA…NNYF) and 96–122 (KVHA…SGNK). Residues 32–61 (TMGTTTTTTTTTTTDGTGGRPITTTTTTVT) are compositionally biased toward low complexity. Phosphoserine is present on serine 73.

It belongs to the SPIRAL1 family. Ubiquitous. Preferentially expressed in above-ground organs.

Its function is as follows. Acts redundantly with SPR1 in maintaining the cortical microtubules organization essential for anisotropic cell growth. The polypeptide is Protein SPIRAL1-like 3 (SP1L3) (Arabidopsis thaliana (Mouse-ear cress)).